We begin with the raw amino-acid sequence, 303 residues long: MGDITVRWTQRLDGETADAVRELLAAASAADGVAPVSEQAVLSLGEPGAARHLLAEHDGELAGYANLVPAHGDHPAMAEAAVAPARRGRGIGTALVREALAAGGADARVWAHGDRPAAKAVAARLGLRTARELWQMRRSLATPQLPELVVPDGIVLRTYAGPADDAELLRVNNAAFDWHPEQGGWTQRDIAVRRAESWFDPAGLFLATDTAAPDRVLGFHWTKVHADEQPPVGEVYVVGIDPAAQGRGLGRLLTLAGLHHLRERGLGGVLLYTEADNTAAVNTYTKLGFAPAHVDVAYAANGA.

2 N-acetyltransferase domains span residues 4-141 (ITVR…RSLA) and 154-303 (IVLR…ANGA). Glutamate 38 is a binding site for 1D-myo-inositol 2-(L-cysteinylamino)-2-deoxy-alpha-D-glucopyranoside. Position 80–82 (80–82 (AAV)) interacts with acetyl-CoA. Residues glutamate 181, lysine 223, and glutamate 234 each contribute to the 1D-myo-inositol 2-(L-cysteinylamino)-2-deoxy-alpha-D-glucopyranoside site. Acetyl-CoA is bound by residues 238–240 (VGI) and 245–251 (QGRGLGR). Residue tyrosine 272 coordinates 1D-myo-inositol 2-(L-cysteinylamino)-2-deoxy-alpha-D-glucopyranoside. 277 to 282 (NTAAVN) lines the acetyl-CoA pocket.

Belongs to the acetyltransferase family. MshD subfamily. In terms of assembly, monomer.

It carries out the reaction 1D-myo-inositol 2-(L-cysteinylamino)-2-deoxy-alpha-D-glucopyranoside + acetyl-CoA = mycothiol + CoA + H(+). Its function is as follows. Catalyzes the transfer of acetyl from acetyl-CoA to desacetylmycothiol (Cys-GlcN-Ins) to form mycothiol. This is Mycothiol acetyltransferase from Nocardia farcinica (strain IFM 10152).